A 445-amino-acid polypeptide reads, in one-letter code: DDB1- and CUL4-associated factor 13 (445 aa).

7 WD repeats span residues Gly-64–Thr-104, Ala-107–Asn-146, Asn-154–Thr-192, Gly-196–Lys-235, Thr-237–Thr-277, Asp-281–Val-320, and Asn-324–Ile-363. Positions Arg-417–Asn-445 are disordered. Residues Pro-430–Asn-445 are compositionally biased toward basic and acidic residues.

This sequence belongs to the WD repeat DCAF13/WDSOF1 family.

It localises to the nucleus. The protein resides in the nucleolus. The protein operates within protein modification; protein ubiquitination. Its function is as follows. Possible role in ribosomal RNA processing. May function as a substrate receptor for CUL4-DDB1 E3 ubiquitin-protein ligase complex. In Dictyostelium discoideum (Social amoeba), this protein is DDB1- and CUL4-associated factor 13 (wdsof1).